The chain runs to 254 residues: MEAPKMELKSYKRKNASLSPSSSPAKAQRTHLSLEEKIKLMRLVVRHKHELVDRKTSEFYAKIARIGYEDEGLAIHTESACRNQIISIMRVYEQRLAHRQPGMKTTPEEDELDQLCDEWKARLSELQQYREKFLVGKRKCDCNDEINERLKKLTEEQQNVDMLVAKVNFLSKHLHDNEEKLMQVNAKMDEVLAENKRLQQLLDHNDLLSKLEPPSAYAPHGVNMGTNMGANMGANMNAIRGGLHSSISPNLGDH.

Residues 1–10 (MEAPKMELKS) show a composition bias toward basic and acidic residues. The segment at 1–30 (MEAPKMELKSYKRKNASLSPSSSPAKAQRT) is disordered. A compositionally biased stretch (low complexity) spans 16–25 (ASLSPSSSPA). Residues S17 and S19 each carry the phosphoserine modification. 4 consecutive repeat copies span residues 221–224 (GVNM), 225–228 (GTNM), 229–232 (GANM), and 233–236 (GANM). The 4 X 4 AA tandem repeats of G-[ATV]-N-M stretch occupies residues 221–236 (GVNMGTNMGANMGANM).

In terms of assembly, homodimer.

The protein resides in the nucleus. Functionally, binds to sequences required for mating-type switching. Makes a simultaneous contact with both the alpha and beta domains of the switch-activating site SAS1. Also binds to replication fork barrier 1 (RFB1) located within a 78 base pair sequence near the 3' end of the rRNA coding region. This leads to replication fork blockage. It binds the consensus sequence 5'-TA[AG]GCAGNTN[CT]AACG[AC]G-3'. In terms of biological role, has a role in chromosome organization and integrity where it is involved in chromosome segregation. Has a role in sister chromatid cohesion and condensation. This Schizosaccharomyces pombe (strain 972 / ATCC 24843) (Fission yeast) protein is Switch-activating protein 1 (sap1).